We begin with the raw amino-acid sequence, 321 residues long: Glucokinase (321 aa).

9-14 (ADIGGT) provides a ligand contact to ATP.

The protein belongs to the bacterial glucokinase family.

Its subcellular location is the cytoplasm. The catalysed reaction is D-glucose + ATP = D-glucose 6-phosphate + ADP + H(+). The chain is Glucokinase from Saccharophagus degradans (strain 2-40 / ATCC 43961 / DSM 17024).